We begin with the raw amino-acid sequence, 233 residues long: Leucyl/phenylalanyl-tRNA--protein transferase (233 aa).

The protein belongs to the L/F-transferase family.

It is found in the cytoplasm. It catalyses the reaction N-terminal L-lysyl-[protein] + L-leucyl-tRNA(Leu) = N-terminal L-leucyl-L-lysyl-[protein] + tRNA(Leu) + H(+). It carries out the reaction N-terminal L-arginyl-[protein] + L-leucyl-tRNA(Leu) = N-terminal L-leucyl-L-arginyl-[protein] + tRNA(Leu) + H(+). The enzyme catalyses L-phenylalanyl-tRNA(Phe) + an N-terminal L-alpha-aminoacyl-[protein] = an N-terminal L-phenylalanyl-L-alpha-aminoacyl-[protein] + tRNA(Phe). Functionally, functions in the N-end rule pathway of protein degradation where it conjugates Leu, Phe and, less efficiently, Met from aminoacyl-tRNAs to the N-termini of proteins containing an N-terminal arginine or lysine. This Chromobacterium violaceum (strain ATCC 12472 / DSM 30191 / JCM 1249 / CCUG 213 / NBRC 12614 / NCIMB 9131 / NCTC 9757 / MK) protein is Leucyl/phenylalanyl-tRNA--protein transferase.